The chain runs to 734 residues: Oligopeptide transporter 2 (734 aa).

A run of 14 helical transmembrane segments spans residues 44-64 (MWFLGLLSCILLSFLNTFFGY), 68-88 (PLMITMISVQVVTLPLGKLMA), 125-145 (GAGFGSGTAYAVGIVDIIMAF), 152-172 (FLASWILVITTQILGYGWAGI), 211-231 (FFVIAFVCSFAWYIFPAYLFL), 252-272 (LGSGMSGLGIGAFALDWSVIA), 283-303 (FFAIVNVLVGYVLVMYMVIPI), 359-379 (FFAISYGIGFAAIVSTLTHVA), 414-434 (WWFYSLLAISLVLSLVLCIFM), 442-462 (WWGLLLASFMALTFTVPVSII), 525-545 (MFLVQFIGTVIAGTVNISVAW), 596-616 (YPALNWFFLGGLIGPVLVWLL), 644-664 (ATSVNFNCWIIVGVIFNYFVF), and 677-697 (VLSAALDAGLAFMGVLLYFSL).

This sequence belongs to the oligopeptide OPT transporter (TC 2.A.67.1) family. As to expression, expressed in flowers, leaves, roots, and stems.

The protein localises to the membrane. Functionally, involved in the translocation of tetra- and pentapeptides across the cellular membrane in an energy-dependent manner. The protein is Oligopeptide transporter 2 (OPT2) of Arabidopsis thaliana (Mouse-ear cress).